The primary structure comprises 495 residues: NADP/NAD-dependent aldehyde dehydrogenase PuuC (495 aa).

Residue 244-249 (GSTRTG) coordinates NAD(+). Catalysis depends on residues Glu267 and Cys302.

Belongs to the aldehyde dehydrogenase family.

The catalysed reaction is an aldehyde + NADP(+) + H2O = a carboxylate + NADPH + 2 H(+). It catalyses the reaction an aldehyde + NAD(+) + H2O = a carboxylate + NADH + 2 H(+). The enzyme catalyses 4-(gamma-L-glutamylamino)butanal + NADP(+) + H2O = 4-(gamma-L-glutamylamino)butanoate + NADPH + 2 H(+). It carries out the reaction 4-(gamma-L-glutamylamino)butanal + NAD(+) + H2O = 4-(gamma-L-glutamylamino)butanoate + NADH + 2 H(+). The protein operates within amine and polyamine degradation; putrescine degradation; 4-aminobutanoate from putrescine: step 3/4. With respect to regulation, lithium ions exhibits the highest inhibition (97%). To a lesser extent (5-20%), potassium, sodium, and ammonium ions also inhibit PuuC activity. Transition metals, such as copper and zinc ions inhibit PuuC activity by more than 90%. The presence of heavy metals (mercury, silver) or sodium hydrogensulfite in the reaction mixture completely inactivate PuuC; in contrast, disulfide reductants such as DTT and 2-mercaptoethanol significantly increase its activity by 75% and 27%, respectively. In terms of biological role, catalyzes the oxidation of 3-hydroxypropionaldehyde (3-HPA) to 3-hydroxypropionic acid (3-HP). It acts preferentially with NAD but can also use NADP. 3-HPA appears to be the most suitable substrate for PuuC followed by isovaleraldehyde, propionaldehyde, butyraldehyde, and valeraldehyde. It might play a role in propionate and/or acetic acid metabolisms. Also involved in the breakdown of putrescine through the oxidation of gamma-Glu-gamma-aminobutyraldehyde to gamma-Glu-gamma-aminobutyrate (gamma-Glu-GABA). In Escherichia coli (strain K12), this protein is NADP/NAD-dependent aldehyde dehydrogenase PuuC.